The primary structure comprises 394 residues: MSKEKFERLKPHVNVGTIGHVDHGKTTLTAAICTVLAKVYGGDAKDFASIDNAPEERERGITISTSHVEYDTPARHYAHVDCPGHADYVKNMITGAAQMDGGILVVAATDGPMPQTREHILLGRQVGIPYIIVFMNKCDMVDDEELLELVEMEVRELLSEYDFPGDDCPVIMGSALGALNGEAQWEEKIIELAEALDNYIPEPERAIDLPFILPIEDVFSIQGRGTVVTGRVEQGIVRIGEEVAIIGIKETTTTTCTGVEMFRKLLDEGRAGENVGVLLRGTKRDDVERGQVLAKPGSITPHTTFESEIYVLSKDEGGRHTPFFKGYRPQFYFRTTDVTGTIELPEGVEMVMPGDNIQMKVTLIAPIAMDEGLRFAIREGGRTVGAGVVAKIFE.

The 195-residue stretch at 10-204 folds into the tr-type G domain; sequence KPHVNVGTIG…ALDNYIPEPE (195 aa). The tract at residues 19–26 is G1; that stretch reads GHVDHGKT. Residue 19–26 coordinates GTP; it reads GHVDHGKT. Threonine 26 serves as a coordination point for Mg(2+). Residues 60-64 form a G2 region; sequence GITIS. The tract at residues 81 to 84 is G3; it reads DCPG. GTP-binding positions include 81-85 and 136-139; these read DCPGH and NKCD. A G4 region spans residues 136 to 139; that stretch reads NKCD. The tract at residues 174-176 is G5; that stretch reads SAL.

It belongs to the TRAFAC class translation factor GTPase superfamily. Classic translation factor GTPase family. EF-Tu/EF-1A subfamily. As to quaternary structure, monomer.

It localises to the cytoplasm. It carries out the reaction GTP + H2O = GDP + phosphate + H(+). Its function is as follows. GTP hydrolase that promotes the GTP-dependent binding of aminoacyl-tRNA to the A-site of ribosomes during protein biosynthesis. The sequence is that of Elongation factor Tu 2 from Photobacterium profundum (strain SS9).